A 95-amino-acid polypeptide reads, in one-letter code: Large ribosomal subunit protein bL27 (95 aa).

Residues 1-6 constitute a propeptide that is removed on maturation; that stretch reads MKLQLF. The tract at residues 1 to 25 is disordered; sequence MKLQLFAHKKGVGSSRNGRDSESKR.

The protein belongs to the bacterial ribosomal protein bL27 family. The N-terminus is cleaved by ribosomal processing cysteine protease Prp.

The polypeptide is Large ribosomal subunit protein bL27 (Thermoanaerobacter pseudethanolicus (strain ATCC 33223 / 39E) (Clostridium thermohydrosulfuricum)).